Here is a 425-residue protein sequence, read N- to C-terminus: Cyclin-K (425 aa).

Residues 262-425 (GKQPIPQQPP…RRYLDDDRNL (164 aa)) form a disordered region. Positions 366-377 (AEPAAASELDPA) are enriched in low complexity. Over residues 379–399 (GPAPPLPHGAPPPLPHRPPPT) the composition is skewed to pro residues.

The protein belongs to the cyclin family.

The protein resides in the nucleus. In terms of biological role, regulatory subunit of cyclin-dependent kinases that mediates activation of target kinases. Plays a role in transcriptional regulation via its role in regulating the phosphorylation of the C-terminal domain (CTD) of the large subunit of RNA polymerase II (POLR2A). In Danio rerio (Zebrafish), this protein is Cyclin-K (ccnk).